The sequence spans 73 residues: UPF0352 protein HSM_0097 (73 aa).

The protein belongs to the UPF0352 family.

The chain is UPF0352 protein HSM_0097 from Histophilus somni (strain 2336) (Haemophilus somnus).